We begin with the raw amino-acid sequence, 340 residues long: Armadillo repeat-containing protein 12 (340 aa).

Positions 1–101 (MGKTIPRFLE…NITRCVYLLE (101 aa)) are interaction with TBC1D15. 3 ARM repeats span residues 100-139 (LEAE…AFSG), 179-218 (LPDY…YLAQ), and 278-318 (SLHE…SLQC). The disordered stretch occupies residues 321–340 (DLGSRPSSCRPSHSCFKTGK). A compositionally biased stretch (low complexity) spans 324–340 (SRPSSCRPSHSCFKTGK).

As to quaternary structure, interacts with TBC1D15, TBC1D21, GK2 and IMMT. Interacts with VDAC2 and VDAC3 in a TBC1D21-dependent manner. Interacts (via ARM domains) with RBBP4. Testis-specific.

Its subcellular location is the nucleus. It is found in the mitochondrion outer membrane. Its function is as follows. Essential for male fertility and sperm mitochondrial sheath formation. Required for proper mitochondrial elongation and coiling along the flagellum during the formation of the mitochondrial sheath. Facilitates the growth and aggressiveness of neuroblastoma cells. Increases the EZH2 activity and H3K27me3 levels in a RBBP4-dependent manner, and facilitates the enrichment of polycomb repressive complex 2 and H3K27me3 on gene promoters, resulting in transcriptional repression of tumor suppressors affecting the proliferation, invasion, and metastasis of tumor cells. This Mus musculus (Mouse) protein is Armadillo repeat-containing protein 12 (Armc12).